The sequence spans 123 residues: Methylmalonyl-CoA carboxyltransferase 1.3S subunit (123 aa).

The region spanning 46–123 (GAGAGKAGEG…QGGQGLIKIG (78 aa)) is the Biotinyl-binding domain. The residue at position 89 (Lys89) is an N6-biotinyllysine.

In terms of assembly, transcarboxylase is composed of three subunits: 1.3S, 5S, and 12S. The core of the enzyme is composed of six 12S subunits. On each side of the core there are three pairs of 5S subunits. Each 5S dimer is attached to the core by two 1.3S subunits. Thus the total number of chains is 30 (6 + 12 + 12).

It carries out the reaction (S)-methylmalonyl-CoA + pyruvate = propanoyl-CoA + oxaloacetate. Its function is as follows. The biotinyl 1.3S subunit serves as a carboxyl carrier between the substrate-binding sites on the 12S and 5S subunits. This chain is Methylmalonyl-CoA carboxyltransferase 1.3S subunit, found in Propionibacterium freudenreichii subsp. shermanii.